The chain runs to 238 residues: MRPNHRENNQIRPVKITRHYTRYAEGSVLIEFGETKVLCNASIEESVPRFLKGQQQGWVTAEYGMLPRATHSRNQREAAKGKQSGRTMEIQRLIARALRAVVDLEALGERTITIDCDVIQADGGTRTAAITGACVALQDAIHKLIADGVLKTNPLKGLVAAISVGIVENEAVCDLEYVEDAKAETDMNVVMVEDGRLVEVQGTAEGKPFSHMELLQLLDLADQGINQLFEVQRQALAE.

Phosphate is bound by residues Arg-86 and 124 to 126; that span reads GTR.

Belongs to the RNase PH family. Homohexameric ring arranged as a trimer of dimers.

The enzyme catalyses tRNA(n+1) + phosphate = tRNA(n) + a ribonucleoside 5'-diphosphate. In terms of biological role, phosphorolytic 3'-5' exoribonuclease that plays an important role in tRNA 3'-end maturation. Removes nucleotide residues following the 3'-CCA terminus of tRNAs; can also add nucleotides to the ends of RNA molecules by using nucleoside diphosphates as substrates, but this may not be physiologically important. Probably plays a role in initiation of 16S rRNA degradation (leading to ribosome degradation) during starvation. The chain is Ribonuclease PH from Haemophilus ducreyi (strain 35000HP / ATCC 700724).